Reading from the N-terminus, the 553-residue chain is Putative transport protein YidE (553 aa).

5 consecutive transmembrane segments (helical) span residues 4–24 (IALT…IGNV), 28–48 (GVGL…HFVS), 65–85 (FGLI…FFAS), 95–115 (LFAV…HKLF), and 158–178 (MSYA…MWML). RCK C-terminal domains follow at residues 191–276 (QQHE…VIGQ) and 279–361 (DTSL…VLGN). 6 consecutive transmembrane segments (helical) span residues 371–391 (MLPV…PVFV), 393–413 (GFPA…ALIL), 439–459 (IVLF…HTLV), 464–484 (LSWI…VGIL), 493–513 (YLTM…LAFA), and 533–553 (LVMF…WSIG).

The protein belongs to the AAE transporter (TC 2.A.81) family. YidE subfamily.

It is found in the cell membrane. This chain is Putative transport protein YidE, found in Escherichia coli O127:H6 (strain E2348/69 / EPEC).